The sequence spans 92 residues: Small ribosomal subunit protein uS19 (92 aa).

The protein belongs to the universal ribosomal protein uS19 family.

Its function is as follows. Protein S19 forms a complex with S13 that binds strongly to the 16S ribosomal RNA. The polypeptide is Small ribosomal subunit protein uS19 (Desulfatibacillum aliphaticivorans).